Consider the following 185-residue polypeptide: Probable RNA 2'-phosphotransferase (185 aa).

This sequence belongs to the KptA/TPT1 family.

Its function is as follows. Removes the 2'-phosphate from RNA via an intermediate in which the phosphate is ADP-ribosylated by NAD followed by a presumed transesterification to release the RNA and generate ADP-ribose 1''-2''-cyclic phosphate (APPR&gt;P). May function as an ADP-ribosylase. This is Probable RNA 2'-phosphotransferase from Rhizobium rhizogenes (strain K84 / ATCC BAA-868) (Agrobacterium radiobacter).